Here is a 446-residue protein sequence, read N- to C-terminus: MADYLTVTHLTKYLKLKFDRDPYLERVYLTGQVSNFRKRPTHQYFSLKDESAVIQATMWAGVYKKLGFDLEEGMKINVIGRVQLYEPSGSYSIVIEKAEPDGIGALALQFEQLKKKLTAEGYFEQKHKQPLPQFVSKIGVITSPSGAVIRDIITTVSRRFPGVEILLFPTKVQGDGAAQEVVANIRRANQREDLDLLIVGRGGGSIEDLWAFNEEIVVQAIFESQLPVISSVGHETDTTLADFVADRRAATPTAAAELATPITKTDLMSWIVERQNRSYQACLRRIKQRQEWVDKLSQSVIFRQPERLYDAYLQKIDRLSMTLMNTMKDRLSSAKENKVQLDHALANSQLQTKIERYQDRVATAKRLLMANMASQYDSQLARFEKAQDALLSLDTSRIIARGYAMIEKNQALVASVSQITKGDQLTIKMRDGQLDVEVKDVKNENI.

It belongs to the XseA family. Heterooligomer composed of large and small subunits.

Its subcellular location is the cytoplasm. The catalysed reaction is Exonucleolytic cleavage in either 5'- to 3'- or 3'- to 5'-direction to yield nucleoside 5'-phosphates.. Its function is as follows. Bidirectionally degrades single-stranded DNA into large acid-insoluble oligonucleotides, which are then degraded further into small acid-soluble oligonucleotides. This Streptococcus pyogenes serotype M49 (strain NZ131) protein is Exodeoxyribonuclease 7 large subunit.